Consider the following 122-residue polypeptide: Small ribosomal subunit protein uS13 (122 aa).

The segment at Leu-94 to Lys-122 is disordered. Basic residues predominate over residues Gln-101–Lys-122.

It belongs to the universal ribosomal protein uS13 family. Part of the 30S ribosomal subunit. Forms a loose heterodimer with protein S19. Forms two bridges to the 50S subunit in the 70S ribosome.

Located at the top of the head of the 30S subunit, it contacts several helices of the 16S rRNA. In the 70S ribosome it contacts the 23S rRNA (bridge B1a) and protein L5 of the 50S subunit (bridge B1b), connecting the 2 subunits; these bridges are implicated in subunit movement. Contacts the tRNAs in the A and P-sites. This Chlamydia trachomatis serovar A (strain ATCC VR-571B / DSM 19440 / HAR-13) protein is Small ribosomal subunit protein uS13.